The primary structure comprises 217 residues: PTB-containing, cubilin and LRP1-interacting protein (217 aa).

Residues 60-217 enclose the PID domain; sequence VTYLGKVSTT…ASQELESDDG (158 aa). The disordered stretch occupies residues 194-217; that stretch reads KSDGRIHRSSSSEEASQELESDDG. Phosphoserine is present on residues S202, S203, and S214. Residues 208 to 217 are compositionally biased toward acidic residues; sequence ASQELESDDG.

As to quaternary structure, found in a complex with PID1/PCLI1, LRP1 and CUBNI. Interacts with LRP1 and CUBN.

It is found in the cytoplasm. Its function is as follows. Increases proliferation of preadipocytes without affecting adipocytic differentiation. This chain is PTB-containing, cubilin and LRP1-interacting protein (Pid1), found in Mus musculus (Mouse).